The primary structure comprises 415 residues: Cyclin-A2 (415 aa).

It belongs to the cyclin family. Cyclin AB subfamily. Interacts with the CDK1 and CDK2 protein kinases to form serine/threonine kinase holoenzyme complexes. As to expression, ubiquitous.

Its subcellular location is the nucleus. It is found in the cytoplasm. In terms of biological role, cyclin which controls both the G1/S and the G2/M transition phases of the cell cycle. Functions through the formation of specific serine/threonine kinase holoenzyme complexes with the cyclin-dependent protein kinases CDK1 and CDK2. The cyclin subunit confers the substrate specificity of these complexes and differentially interacts with and activates CDK1 and CDK2 throughout the cell cycle. The chain is Cyclin-A2 (ccna2) from Xenopus laevis (African clawed frog).